The chain runs to 189 residues: Probable nicotinate-nucleotide adenylyltransferase (189 aa).

This sequence belongs to the NadD family.

The enzyme catalyses nicotinate beta-D-ribonucleotide + ATP + H(+) = deamido-NAD(+) + diphosphate. It functions in the pathway cofactor biosynthesis; NAD(+) biosynthesis; deamido-NAD(+) from nicotinate D-ribonucleotide: step 1/1. Functionally, catalyzes the reversible adenylation of nicotinate mononucleotide (NaMN) to nicotinic acid adenine dinucleotide (NaAD). This Hydrogenobaculum sp. (strain Y04AAS1) protein is Probable nicotinate-nucleotide adenylyltransferase.